A 273-amino-acid chain; its full sequence is Putative pyruvate, phosphate dikinase regulatory protein (273 aa).

153–160 contacts ADP; the sequence is GVSRTSKS.

The protein belongs to the pyruvate, phosphate/water dikinase regulatory protein family. PDRP subfamily.

The enzyme catalyses N(tele)-phospho-L-histidyl/L-threonyl-[pyruvate, phosphate dikinase] + ADP = N(tele)-phospho-L-histidyl/O-phospho-L-threonyl-[pyruvate, phosphate dikinase] + AMP + H(+). It catalyses the reaction N(tele)-phospho-L-histidyl/O-phospho-L-threonyl-[pyruvate, phosphate dikinase] + phosphate + H(+) = N(tele)-phospho-L-histidyl/L-threonyl-[pyruvate, phosphate dikinase] + diphosphate. Bifunctional serine/threonine kinase and phosphorylase involved in the regulation of the pyruvate, phosphate dikinase (PPDK) by catalyzing its phosphorylation/dephosphorylation. This is Putative pyruvate, phosphate dikinase regulatory protein from Ehrlichia chaffeensis (strain ATCC CRL-10679 / Arkansas).